The sequence spans 221 residues: Large ribosomal subunit protein uL3 (221 aa).

The disordered stretch occupies residues 123 to 156 (GFAGSIKRHNQSRGPESHGSRYHRRPGSMGPIKG).

The protein belongs to the universal ribosomal protein uL3 family. Part of the 50S ribosomal subunit. Forms a cluster with proteins L14 and L19.

In terms of biological role, one of the primary rRNA binding proteins, it binds directly near the 3'-end of the 23S rRNA, where it nucleates assembly of the 50S subunit. This Aster yellows witches'-broom phytoplasma (strain AYWB) protein is Large ribosomal subunit protein uL3.